A 170-amino-acid chain; its full sequence is uncharacterized protein (170 aa).

The signal sequence occupies residues 1–28 (MTGGVMSQKFVVGAGLLVCSVCSLSAMA).

Belongs to the fimbrial protein family.

Its function is as follows. Part of the yfcOPQRSUV fimbrial operon. Could contribute to adhesion to various surfaces in specific environmental niches. Increases adhesion to eukaryotic T24 bladder epithelial cells in the absence of fim genes. This is an uncharacterized protein from Escherichia coli (strain K12).